Consider the following 286-residue polypeptide: MAPAVQQQQSGGGGGSTGAAAVGSTTRWCPTPEQLMMLEEMYRGGLRTPNAAQIQQITAHLSTYGRIEGKNVFYWFQNHKARDRQKLRRRLCISHHLLSCAHYYHHHLAAAAAVVPTTKLLTTLNPSSSSSSCGGGLNEDANSLLSPTSPTTPTSAAAAAAAAAYTTSYYYPFTAAAAPPPPRTSPAASPLFHYNQGGGGVVLPAAEAIGRSSSSSDYSLGKLVDNFGVALEETFPAQPQQPATTMAMTAVVDTTAVAAAAGGFCRPLKTLDLFPGGLKEEQHDVV.

Disordered stretches follow at residues 1-25 (MAPA…VGST) and 128-152 (SSSS…SPTT). A DNA-binding region (homeobox; WUS-type) is located at residues 23–87 (GSTTRWCPTP…NHKARDRQKL (65 aa)).

Belongs to the WUS homeobox family.

The protein resides in the nucleus. Functionally, transcription factor which may be involved in developmental processes. In Oryza sativa subsp. indica (Rice), this protein is Putative WUSCHEL-related homeobox 2 (WOX2).